The primary structure comprises 246 residues: Probable transcriptional regulatory protein YebC (246 aa).

The disordered stretch occupies residues 1–20; sequence MAGHSKWANTRHRKAAQDAK.

Belongs to the TACO1 family.

It localises to the cytoplasm. In Shigella boydii serotype 4 (strain Sb227), this protein is Probable transcriptional regulatory protein YebC.